Here is a 239-residue protein sequence, read N- to C-terminus: MATPHINAEMGDFADVVLMPGDPLRAKHIAETFLEDVREVNNVRGMLGFTGTYKGRKISVMGHGMGIPSCSIYTKELITDFGVKKIIRVGSCGAVREDVKLRDVVIGMGACTDSKVNRLRFKDHDFAAIADFGMVRNAVDAAKALGVDARVGNIFSADLFYTPDPSMFDVMEKYGILGVEMEAAGIYGVAAEFGAKALTICTVSDHIRTHEQTTAAERQTTFNDMIKIALESVLLGDKE.

Position 5 (His-5) interacts with a purine D-ribonucleoside. Residues Gly-21, Arg-25, Arg-44, and 88 to 91 (RVGS) contribute to the phosphate site. A purine D-ribonucleoside contacts are provided by residues 180–182 (EME) and 204–205 (SD). Asp-205 serves as the catalytic Proton donor.

This sequence belongs to the PNP/UDP phosphorylase family. Homohexamer; trimer of homodimers.

The enzyme catalyses a purine D-ribonucleoside + phosphate = a purine nucleobase + alpha-D-ribose 1-phosphate. It carries out the reaction a purine 2'-deoxy-D-ribonucleoside + phosphate = a purine nucleobase + 2-deoxy-alpha-D-ribose 1-phosphate. Its function is as follows. Catalyzes the reversible phosphorolytic breakdown of the N-glycosidic bond in the beta-(deoxy)ribonucleoside molecules, with the formation of the corresponding free purine bases and pentose-1-phosphate. This Klebsiella pneumoniae (strain 342) protein is Purine nucleoside phosphorylase DeoD-type.